The primary structure comprises 56 residues: UPF0434 protein WIGBR2520 (56 aa).

The protein belongs to the UPF0434 family.

This is UPF0434 protein WIGBR2520 from Wigglesworthia glossinidia brevipalpis.